Reading from the N-terminus, the 65-residue chain is Urease accessory protein UreI (65 aa).

Probably facilitates nickel incorporation. May constitute a multicomponent high-affinity nickel transporter. Not essential for the expression of catalytically active urease. The sequence is that of Urease accessory protein UreI (ureI) from Bacillus sp. (strain TB-90).